Reading from the N-terminus, the 709-residue chain is Elongation factor G (709 aa).

The tr-type G domain occupies 6–295 (KFLRNIGIMA…AVCTYLPSPL (290 aa)). GTP-binding positions include 15 to 22 (AHIDAGKT), 92 to 96 (DTPGH), and 146 to 149 (NKMD).

This sequence belongs to the TRAFAC class translation factor GTPase superfamily. Classic translation factor GTPase family. EF-G/EF-2 subfamily.

The protein resides in the cytoplasm. Catalyzes the GTP-dependent ribosomal translocation step during translation elongation. During this step, the ribosome changes from the pre-translocational (PRE) to the post-translocational (POST) state as the newly formed A-site-bound peptidyl-tRNA and P-site-bound deacylated tRNA move to the P and E sites, respectively. Catalyzes the coordinated movement of the two tRNA molecules, the mRNA and conformational changes in the ribosome. The chain is Elongation factor G from Amoebophilus asiaticus (strain 5a2).